Here is a 429-residue protein sequence, read N- to C-terminus: Sex determination protein fox-1 (429 aa).

Residues 156–180 (ATTAGSTNGSAAVTQPDPSTSSGPD) show a composition bias toward low complexity. The disordered stretch occupies residues 156–188 (ATTAGSTNGSAAVTQPDPSTSSGPDGPKRLHVS). An RRM domain is found at 183–259 (KRLHVSNIPF…RKIEVNCATA (77 aa)).

Interacts with sup-12. In males and hermaphrodites expressed in a subset of cells in the head and tail. Expressed in the pharynx, intestine and in muscles from the vulva and body wall.

Its subcellular location is the nucleus. Functionally, RNA-binding protein that regulates tissue-specific alternative splicing events by binding to 5'-UGCAUG-3' and 5'-GCACG-3' elements. Also binds to poly(A), poly(G), poly(C), or poly(U) stretches of RNA. Plays a role in the sex determination pathway and X chromosome dosage compensation, and together with sex-1 is involved in making the distinction between one and two X-chromosomes. Binds to 5'-GCAUG-3' and 5'-GCACG-3' elements in intron 6 of the pre-mRNA of the sex-determining factor xol-1 to promote its alternative splicing and together with sex-1 negatively regulates the expression of xol-1 to promote hermaphrodite development. Negatively regulates the expression of the active isoform of xol-1 (isoform b) by promoting intron 6 retention and the deletion of exon 7 coding sequences in hermaphrodite embryos. Furthermore, binding to the pre-mRNA of xol-1 can also direct the use of an alternative 3' splice site enabling the xol-1 transcript to be trans-spliced to unrelated genes on chromosome 2, which also leads to xol-1 exon 7 deletion. Does not seem to regulate the retention of introns 1 to 5 of xol-1 pre-mRNA. Plays a role in the association of the dosage compensation complex proteins dpy-27 and sdc-3 with the hermaphrodite X chromosomes. Binds to 5'-UGCAUG-3' elements in intron 7 of the pre-mRNA of unc-32 to promote its alternative splicing in neuronal tissues. Binds to 5'-UGCAUG-3' elements in intron 4 of the pre-mRNA of egl-15 to promote its alternative splicing in body wall muscle tissues. Promotes binding of RNA-binding protein sup-12 to target RNA. Plays a role in male mating behavior. The protein is Sex determination protein fox-1 of Caenorhabditis elegans.